A 292-amino-acid polypeptide reads, in one-letter code: Probable septum site-determining protein MinC (292 aa).

A disordered region spans residues 109-188 (QVIDTAPPND…PQSSSALVIT (80 aa)). The segment covering 140-150 (QDDEADGEQAD) has biased composition (acidic residues). The segment covering 171-185 (ANRPTATPPQSSSAL) has biased composition (polar residues).

Belongs to the MinC family. In terms of assembly, interacts with MinD and FtsZ.

In terms of biological role, cell division inhibitor that blocks the formation of polar Z ring septums. Rapidly oscillates between the poles of the cell to destabilize FtsZ filaments that have formed before they mature into polar Z rings. Prevents FtsZ polymerization. This chain is Probable septum site-determining protein MinC, found in Bordetella pertussis (strain Tohama I / ATCC BAA-589 / NCTC 13251).